We begin with the raw amino-acid sequence, 85 residues long: Hepcidin (85 aa).

An N-terminal signal peptide occupies residues 1-24; it reads MKTFSVAVAVAVVLAFICLQESSA. The propeptide occupies 25 to 64; it reads VPANEEQELEQQIYFADPEMPVESCKMPYYMRENRQGSPA. Cystine bridges form between Cys-66/Cys-83, Cys-69/Cys-72, Cys-70/Cys-79, and Cys-73/Cys-82.

As to quaternary structure, monomer. In terms of tissue distribution, expressed in all tissues tested, with highest levels of expression in kidney and lowest levels in liver. Intra-peritoneal injection of lipopolysaccharide results in increased expression in heart, spleen and stomach, but not in kidney or liver.

The protein resides in the secreted. Functionally, seems to act as a signaling molecule involved in the maintenance of iron homeostasis. Seems to be required in conjunction with HFE to regulate both intestinal iron absorption and iron storage in macrophages. Has very strong antibacterial activity against the marine Gram-negative bacteria V.alginolyticus (MIC=24 uM), V.fluvialis, V.harveyis (MIC=12 uM) and V.parahaemolyticus (MIC=6 uM). Has antibacterial activity against the Gram-negative bacteria A.hydrophila (MIC=6 uM), E.coli (MIC=24 uM), and E.coli BL21(DE3)plysS (MIC=6 uM), and the Gram-positive bacteria B.cereus (MIC=24 uM), B.subtilis (MIC=6 uM), C.glutamicum (MIC=3 uM), M.luteus (MIC=3 uM), M.lysodeikticus, S.aureus (MIC=6 uM) and S.epidermis (MIC=12 uM). Possesses antifungal activity against A.niger (MIC=24 uM), F.graminearum (MIC24 uM) and F.solani (MIC=24 uM), but lacks antifungal activity against the yeasts P.pastoris GS115 and C.albicans. In Larimichthys crocea (Large yellow croaker), this protein is Hepcidin.